The following is a 188-amino-acid chain: Large ribosomal subunit protein uL6 (188 aa).

This sequence belongs to the universal ribosomal protein uL6 family. In terms of assembly, part of the 50S ribosomal subunit.

This protein binds to the 23S rRNA, and is important in its secondary structure. It is located near the subunit interface in the base of the L7/L12 stalk, and near the tRNA binding site of the peptidyltransferase center. The sequence is that of Large ribosomal subunit protein uL6 from Myxococcus xanthus (strain DK1622).